The sequence spans 329 residues: Glyceraldehyde-3-phosphate dehydrogenase 1 (329 aa).

NAD(+) is bound by residues 11 to 12, aspartate 33, and lysine 78; that span reads RI. Residues 148–150, threonine 179, 208–209, and arginine 231 contribute to the D-glyceraldehyde 3-phosphate site; these read SCT and TG. Cysteine 149 (nucleophile) is an active-site residue. Asparagine 313 lines the NAD(+) pocket.

The protein belongs to the glyceraldehyde-3-phosphate dehydrogenase family. As to quaternary structure, homotetramer.

The protein localises to the cytoplasm. It catalyses the reaction D-glyceraldehyde 3-phosphate + phosphate + NAD(+) = (2R)-3-phospho-glyceroyl phosphate + NADH + H(+). It participates in carbohydrate degradation; glycolysis; pyruvate from D-glyceraldehyde 3-phosphate: step 1/5. In Kluyveromyces lactis (strain ATCC 8585 / CBS 2359 / DSM 70799 / NBRC 1267 / NRRL Y-1140 / WM37) (Yeast), this protein is Glyceraldehyde-3-phosphate dehydrogenase 1 (GAP1).